The following is a 230-amino-acid chain: Urease accessory protein UreG (230 aa).

33 to 40 (GPVGSGKT) contributes to the GTP binding site.

Belongs to the SIMIBI class G3E GTPase family. UreG subfamily. Homodimer. UreD, UreF and UreG form a complex that acts as a GTP-hydrolysis-dependent molecular chaperone, activating the urease apoprotein by helping to assemble the nickel containing metallocenter of UreC. The UreE protein probably delivers the nickel.

It localises to the cytoplasm. Facilitates the functional incorporation of the urease nickel metallocenter. This process requires GTP hydrolysis, probably effectuated by UreG. The chain is Urease accessory protein UreG from Mycobacteroides abscessus (strain ATCC 19977 / DSM 44196 / CCUG 20993 / CIP 104536 / JCM 13569 / NCTC 13031 / TMC 1543 / L948) (Mycobacterium abscessus).